The sequence spans 78 residues: Large ribosomal subunit protein bL28 (78 aa).

It belongs to the bacterial ribosomal protein bL28 family.

The sequence is that of Large ribosomal subunit protein bL28 from Francisella tularensis subsp. holarctica (strain FTNF002-00 / FTA).